A 251-amino-acid polypeptide reads, in one-letter code: tRNA (guanine-N(7)-)-methyltransferase (251 aa).

S-adenosyl-L-methionine is bound by residues glutamate 69, glutamate 94, aspartate 121, and aspartate 143. Aspartate 143 is an active-site residue. Substrate-binding residues include lysine 147 and aspartate 179.

It belongs to the class I-like SAM-binding methyltransferase superfamily. TrmB family.

It catalyses the reaction guanosine(46) in tRNA + S-adenosyl-L-methionine = N(7)-methylguanosine(46) in tRNA + S-adenosyl-L-homocysteine. It functions in the pathway tRNA modification; N(7)-methylguanine-tRNA biosynthesis. Catalyzes the formation of N(7)-methylguanine at position 46 (m7G46) in tRNA. The protein is tRNA (guanine-N(7)-)-methyltransferase of Rhodopseudomonas palustris (strain BisB18).